A 718-amino-acid chain; its full sequence is Putative aminodeoxychorismate synthase (718 aa).

Residues 9–203 form the Glutamine amidotransferase type-1 domain; it reads QILLIDCYDS…LSLADTPNIQ (195 aa). Residue C88 is the Nucleophile of the active site. Residues H177 and E179 contribute to the active site. The interval 266-718 is PABB component; it reads FLDSAKKPGR…NLKNKKRSCK (453 aa).

The protein in the C-terminal section; belongs to the anthranilate synthase component I family.

It is found in the cytoplasm. The protein resides in the nucleus. It carries out the reaction chorismate + L-glutamine = 4-amino-4-deoxychorismate + L-glutamate. It participates in cofactor biosynthesis; tetrahydrofolate biosynthesis; 4-aminobenzoate from chorismate: step 1/2. Its function is as follows. Catalyzes the biosynthesis of 4-amino-4-deoxychorismate (ADC) from chorismate and glutamine. Required for the synthesis of 4-aminobenzoate (PABA), an important component in tetrahydrofolate biosynthesis. This Schizosaccharomyces pombe (strain 972 / ATCC 24843) (Fission yeast) protein is Putative aminodeoxychorismate synthase.